Here is a 53-residue protein sequence, read N- to C-terminus: Tsetse thrombin inhibitor (53 aa).

Positions 1–21 (MKFFTVLFFLLSIIYLIVAAP) are cleaved as a signal peptide.

Expressed at high levels in salivary glands and midguts of adult tsetse flies.

The protein resides in the secreted. Potent and specific inhibitor of human thrombin. It is also a potent inhibitor of thrombin-induced platelet aggregation. It is capable of antagonizing host hemostasis and facilitating blood feeding. The polypeptide is Tsetse thrombin inhibitor (TTI) (Glossina morsitans morsitans (Savannah tsetse fly)).